A 149-amino-acid polypeptide reads, in one-letter code: 17 kDa major membrane protein (149 aa).

An N-terminal signal peptide occupies residues 1-19 (MKKIIKLSLLSLSIAGLAS). Cysteine 20 carries N-palmitoyl cysteine lipidation. A lipid anchor (S-diacylglycerol cysteine) is attached at cysteine 20.

It is found in the cell outer membrane. The chain is 17 kDa major membrane protein from Francisella tularensis subsp. holarctica (strain LVS).